Here is a 268-residue protein sequence, read N- to C-terminus: Hydroxyethylthiazole kinase (268 aa).

Met-49 is a substrate binding site. ATP-binding residues include Lys-124 and Thr-168. A substrate-binding site is contributed by Ala-195.

This sequence belongs to the Thz kinase family. The cofactor is Mg(2+).

It catalyses the reaction 5-(2-hydroxyethyl)-4-methylthiazole + ATP = 4-methyl-5-(2-phosphooxyethyl)-thiazole + ADP + H(+). Its pathway is cofactor biosynthesis; thiamine diphosphate biosynthesis; 4-methyl-5-(2-phosphoethyl)-thiazole from 5-(2-hydroxyethyl)-4-methylthiazole: step 1/1. Functionally, catalyzes the phosphorylation of the hydroxyl group of 4-methyl-5-beta-hydroxyethylthiazole (THZ). In Archaeoglobus fulgidus (strain ATCC 49558 / DSM 4304 / JCM 9628 / NBRC 100126 / VC-16), this protein is Hydroxyethylthiazole kinase.